A 182-amino-acid chain; its full sequence is Flavin prenyltransferase UbiX (182 aa).

FMN is bound by residues 9-11 (GAS), serine 35, 86-89 (SIKT), and arginine 121. Residues tyrosine 151 and arginine 167 each coordinate dimethylallyl phosphate.

This sequence belongs to the UbiX/PAD1 family.

It carries out the reaction dimethylallyl phosphate + FMNH2 = prenylated FMNH2 + phosphate. Its function is as follows. Flavin prenyltransferase that catalyzes the synthesis of the prenylated FMN cofactor (prenyl-FMN) for 4-hydroxy-3-polyprenylbenzoic acid decarboxylase UbiD. The prenyltransferase is metal-independent and links a dimethylallyl moiety from dimethylallyl monophosphate (DMAP) to the flavin N5 and C6 atoms of FMN. This chain is Flavin prenyltransferase UbiX, found in Archaeoglobus fulgidus (strain ATCC 49558 / DSM 4304 / JCM 9628 / NBRC 100126 / VC-16).